A 226-amino-acid polypeptide reads, in one-letter code: 7-cyano-7-deazaguanine synthase (226 aa).

An ATP-binding site is contributed by 11-21 (LSGGLDSATCL). Zn(2+) is bound by residues C191, C201, C204, and C207.

It belongs to the QueC family. Zn(2+) serves as cofactor.

The enzyme catalyses 7-carboxy-7-deazaguanine + NH4(+) + ATP = 7-cyano-7-deazaguanine + ADP + phosphate + H2O + H(+). The protein operates within purine metabolism; 7-cyano-7-deazaguanine biosynthesis. Its function is as follows. Catalyzes the ATP-dependent conversion of 7-carboxy-7-deazaguanine (CDG) to 7-cyano-7-deazaguanine (preQ(0)). The sequence is that of 7-cyano-7-deazaguanine synthase from Aromatoleum aromaticum (strain DSM 19018 / LMG 30748 / EbN1) (Azoarcus sp. (strain EbN1)).